The sequence spans 775 residues: Transposon TX1 uncharacterized 82 kDa protein (775 aa).

Over residues 1-10 (MGGNKKESYK) the composition is skewed to basic and acidic residues. 3 disordered regions span residues 1-46 (MGGN…ASTS), 256-277 (PKGQ…KTSY), and 535-565 (PIQD…TSTV). Over residues 35–46 (EPMSKSPIASTS) the composition is skewed to polar residues. Residues 539 to 549 (PADKTAGKDGE) show a composition bias toward basic and acidic residues.

The protein is Transposon TX1 uncharacterized 82 kDa protein of Xenopus laevis (African clawed frog).